Here is a 99-residue protein sequence, read N- to C-terminus: NADH-quinone oxidoreductase subunit K (99 aa).

3 helical membrane passes run 3 to 23 (PENYLYLSALLFTIGAAGVLI), 28 to 48 (IIVFMCIELMLNASNLAFVTF), and 59 to 79 (VFAFFTMVVAAAEVVVGLAII).

It belongs to the complex I subunit 4L family. As to quaternary structure, NDH-1 is composed of 14 different subunits. Subunits NuoA, H, J, K, L, M, N constitute the membrane sector of the complex.

The protein resides in the cell membrane. The catalysed reaction is a quinone + NADH + 5 H(+)(in) = a quinol + NAD(+) + 4 H(+)(out). Its function is as follows. NDH-1 shuttles electrons from NADH, via FMN and iron-sulfur (Fe-S) centers, to quinones in the respiratory chain. The immediate electron acceptor for the enzyme in this species is believed to be a menaquinone. Couples the redox reaction to proton translocation (for every two electrons transferred, four hydrogen ions are translocated across the cytoplasmic membrane), and thus conserves the redox energy in a proton gradient. In Rhodococcus jostii (strain RHA1), this protein is NADH-quinone oxidoreductase subunit K.